Consider the following 158-residue polypeptide: Large ribosomal subunit protein uL13 (158 aa).

A disordered region spans residues 129 to 158 (PEHGHHAQKPVALDFGAMNNKNGRGNNAGR). Residues 144–158 (GAMNNKNGRGNNAGR) are compositionally biased toward low complexity.

Belongs to the universal ribosomal protein uL13 family. Part of the 50S ribosomal subunit.

In terms of biological role, this protein is one of the early assembly proteins of the 50S ribosomal subunit, although it is not seen to bind rRNA by itself. It is important during the early stages of 50S assembly. The polypeptide is Large ribosomal subunit protein uL13 (Anaplasma phagocytophilum (strain HZ)).